The following is a 702-amino-acid chain: Polyribonucleotide nucleotidyltransferase (702 aa).

Mg(2+) is bound by residues Asp-485 and Asp-491. Residues 552–611 enclose the KH domain; the sequence is PKTSTLQIDPEKIRDVIGAGGKVINKIIADTGVKIDIKEDGLVYVSSAESEGVKEAVKII. The S1 motif domain occupies 621 to 689; that stretch reads GEIYLGKVTK…SQGRINLSRK (69 aa).

Belongs to the polyribonucleotide nucleotidyltransferase family. Mg(2+) is required as a cofactor.

The protein resides in the cytoplasm. The catalysed reaction is RNA(n+1) + phosphate = RNA(n) + a ribonucleoside 5'-diphosphate. Its function is as follows. Involved in mRNA degradation. Catalyzes the phosphorolysis of single-stranded polyribonucleotides processively in the 3'- to 5'-direction. This Clostridium perfringens (strain ATCC 13124 / DSM 756 / JCM 1290 / NCIMB 6125 / NCTC 8237 / Type A) protein is Polyribonucleotide nucleotidyltransferase.